A 569-amino-acid polypeptide reads, in one-letter code: Urease subunit alpha (569 aa).

The Urease domain occupies 131–569 (GGIDTHIHFI…LPLAQRYLLL (439 aa)). Ni(2+)-binding residues include His136, His138, and Lys219. Lys219 bears the N6-carboxylysine mark. His221 is a binding site for substrate. Residues His248 and His274 each coordinate Ni(2+). The active-site Proton donor is the His322. Residue Asp362 coordinates Ni(2+).

The protein belongs to the metallo-dependent hydrolases superfamily. Urease alpha subunit family. Heterotrimer of UreA (gamma), UreB (beta) and UreC (alpha) subunits. Three heterotrimers associate to form the active enzyme. Ni cation serves as cofactor. Carboxylation allows a single lysine to coordinate two nickel ions.

It is found in the cytoplasm. The catalysed reaction is urea + 2 H2O + H(+) = hydrogencarbonate + 2 NH4(+). It participates in nitrogen metabolism; urea degradation; CO(2) and NH(3) from urea (urease route): step 1/1. The chain is Urease subunit alpha from Synechococcus sp. (strain WH7805).